We begin with the raw amino-acid sequence, 190 residues long: Molybdenum cofactor guanylyltransferase (190 aa).

Residues 8–10, lysine 20, aspartate 64, and aspartate 98 each bind GTP; that span reads LAG. Mg(2+) is bound at residue aspartate 98.

This sequence belongs to the MobA family. In terms of assembly, monomer. Mg(2+) is required as a cofactor.

It is found in the cytoplasm. It carries out the reaction Mo-molybdopterin + GTP + H(+) = Mo-molybdopterin guanine dinucleotide + diphosphate. Its function is as follows. Transfers a GMP moiety from GTP to Mo-molybdopterin (Mo-MPT) cofactor (Moco or molybdenum cofactor) to form Mo-molybdopterin guanine dinucleotide (Mo-MGD) cofactor. The polypeptide is Molybdenum cofactor guanylyltransferase (Rhodobacter capsulatus (Rhodopseudomonas capsulata)).